The following is a 574-amino-acid chain: MTIEFSNFSFRYESLDKPTLRNINLRIEKGEKIVIIGPSGSGKSTLGQCLNGLIPHAIKGEVSGSLTINGQETATFAMHQFTEQVGTVLQDTDSQFVGLSIGEDIAFALENQLTANIEMYSLVKATAKMVDLEQMLQRSPHDLSGGQKQRVSLAGILVDDVDILLFDEPLAALDPKTGKRTIEIIDDLHRKTGKTVVIIEHRLEDVLHRHVDRIILMDGGEIIADTTPDELLASPLLAQYGIREPLYLTALKSAGCHLALDDHPSSLSELPLANYQHAMADWFHQANTTSNHIRSETLLDVRNLTYSYDGEKNALEGVSFNVQRGEFVSILGKNGSGKSTITKLIMGVIEPDDGTMHLNGQDLSELTIFERSQKVGVVMQNPNHMISHHMIFDEVAFGLRNRGWDEQQVNDKVLEALELCGLSKYRHWPIEALSYGQKKRVTIASILALEPELLMLDEPTAGQDYRNYTSMLSFIEKLNRELGITVVIISHDMHLVLEYTTRSIVIADSQLVADAPMTDVFSNPALLDRANLTTTSLYELATRLNMAETNAFMQHFIDVEKASRLEKTVERNVA.

ABC transporter domains lie at 3–244 (IEFS…GIRE) and 299–533 (LDVR…ANLT). Residues 37 to 44 (GPSGSGKS) and 332 to 339 (GKNGSGKS) contribute to the ATP site.

Belongs to the ABC transporter superfamily.

The protein resides in the cell inner membrane. Probably part of an ABC transporter complex. Responsible for energy coupling to the transport system. The chain is Putative ABC transporter ATP-binding protein VVA0347 from Vibrio vulnificus (strain YJ016).